The sequence spans 263 residues: Aminoglycoside 3'-phosphotransferase (263 aa).

Aspartate 189 serves as the catalytic Proton acceptor.

This sequence belongs to the aminoglycoside phosphotransferase family.

It carries out the reaction kanamycin A + ATP = kanamycin 3'-phosphate + ADP + H(+). Functionally, resistance to kanamycin and structurally-related aminoglycosides, including amikacin. The chain is Aminoglycoside 3'-phosphotransferase (aphA) from Staphylococcus aureus.